The following is a 209-amino-acid chain: Pyridoxal 5'-phosphate synthase subunit PdxT (209 aa).

L-glutamine is bound at residue 58–60; sequence GES. Cysteine 90 serves as the catalytic Nucleophile. Residues arginine 119 and 148–149 each bind L-glutamine; that span reads IR. Catalysis depends on charge relay system residues histidine 185 and glutamate 187.

It belongs to the glutaminase PdxT/SNO family. In terms of assembly, in the presence of PdxS, forms a dodecamer of heterodimers. Only shows activity in the heterodimer.

It carries out the reaction aldehydo-D-ribose 5-phosphate + D-glyceraldehyde 3-phosphate + L-glutamine = pyridoxal 5'-phosphate + L-glutamate + phosphate + 3 H2O + H(+). The catalysed reaction is L-glutamine + H2O = L-glutamate + NH4(+). It participates in cofactor biosynthesis; pyridoxal 5'-phosphate biosynthesis. Functionally, catalyzes the hydrolysis of glutamine to glutamate and ammonia as part of the biosynthesis of pyridoxal 5'-phosphate. The resulting ammonia molecule is channeled to the active site of PdxS. This is Pyridoxal 5'-phosphate synthase subunit PdxT from Clavibacter sepedonicus (Clavibacter michiganensis subsp. sepedonicus).